The primary structure comprises 339 residues: Biotin synthase (339 aa).

The region spanning 55-288 (LSEGALHSCS…GKIIKFAAGR (234 aa)) is the Radical SAM core domain. [4Fe-4S] cluster contacts are provided by Cys73, Cys77, and Cys80. [2Fe-2S] cluster contacts are provided by Cys152, Cys213, and Lys283.

The protein belongs to the radical SAM superfamily. Biotin synthase family. In terms of assembly, homodimer. [4Fe-4S] cluster serves as cofactor. [2Fe-2S] cluster is required as a cofactor.

It carries out the reaction (4R,5S)-dethiobiotin + (sulfur carrier)-SH + 2 reduced [2Fe-2S]-[ferredoxin] + 2 S-adenosyl-L-methionine = (sulfur carrier)-H + biotin + 2 5'-deoxyadenosine + 2 L-methionine + 2 oxidized [2Fe-2S]-[ferredoxin]. It participates in cofactor biosynthesis; biotin biosynthesis; biotin from 7,8-diaminononanoate: step 2/2. Its function is as follows. Catalyzes the conversion of dethiobiotin (DTB) to biotin by the insertion of a sulfur atom into dethiobiotin via a radical-based mechanism. The protein is Biotin synthase of Chlorobium phaeobacteroides (strain BS1).